The primary structure comprises 302 residues: Ribose-5-phosphate isomerase (302 aa).

This sequence belongs to the ribose 5-phosphate isomerase family.

It is found in the cytoplasm. It carries out the reaction aldehydo-D-ribose 5-phosphate = D-ribulose 5-phosphate. It functions in the pathway carbohydrate degradation; pentose phosphate pathway; D-ribose 5-phosphate from D-ribulose 5-phosphate (non-oxidative stage): step 1/1. This chain is Ribose-5-phosphate isomerase (RKI1), found in Cryptococcus neoformans var. neoformans serotype D (strain B-3501A) (Filobasidiella neoformans).